A 237-amino-acid polypeptide reads, in one-letter code: Demethylmenaquinone methyltransferase (237 aa).

S-adenosyl-L-methionine contacts are provided by residues Thr-58, Asp-79, and 106–107 (NA).

It belongs to the class I-like SAM-binding methyltransferase superfamily. MenG/UbiE family.

The catalysed reaction is a 2-demethylmenaquinol + S-adenosyl-L-methionine = a menaquinol + S-adenosyl-L-homocysteine + H(+). It functions in the pathway quinol/quinone metabolism; menaquinone biosynthesis; menaquinol from 1,4-dihydroxy-2-naphthoate: step 2/2. Methyltransferase required for the conversion of demethylmenaquinol (DMKH2) to menaquinol (MKH2). The chain is Demethylmenaquinone methyltransferase from Bacillus mycoides (strain KBAB4) (Bacillus weihenstephanensis).